The following is a 300-amino-acid chain: Dioxygenase FUM3 (300 aa).

Fe cation is bound by residues His146, Asp148, and His222.

This sequence belongs to the PhyH family. Homodimer. Fe cation serves as cofactor.

It functions in the pathway mycotoxin biosynthesis. In terms of biological role, dioxygenase; part of the gene cluster that mediates the biosynthesis of fumonisins B1 (FB1), B2 (FB2), B3 (FB3), and B4 (FB4), which are carcinogenic mycotoxins. Within the pathway, FUM3 performs the C-5 hydroxylation present in FB1 and FB2 and which occurs late in the biosynthesis. The biosynthesis starts with the FUM1-catalyzed carbon chain assembly from one molecule of acetyl-CoA, eight molecules of malonyl-CoA, and two molecules of methionine (in S-adenosyl form). The C18 polyketide chain is released from the enzyme by a nucleophilic attack of a carbanion, which is derived from R-carbon of alanine by decarboxylation, on the carbonyl carbon of polyketide acyl chain. This step is catalyzed by the pyridoxal 5'-phosphate-dependent aminoacyl transferase FUM8. The resultant 3-keto intermediate is then stereospecifically reduced to a 3-hydroxyl product by reductase FUM13. Subsequent oxidations at C-10 by the cytochrome P450 monooxygenase FUM2, C-14 and C-15 by FUM6, FUM12 or FUM15, tricarballylic esterification of the hydroxyl groups on C-14 and C-15 by acyltransferase FUM14, and C-5 hydroxylation by 2-keto-glutarate-dependent dioxygenase FUM3 furnish the biosynthesis of fumonisins. The tricarballylic moieties are most likely derived from the citric acid cycle, and their addition to the carbon backbone may involve FUM7, FUM10, FUM11 and FUM14. This Gibberella moniliformis (strain M3125 / FGSC 7600) (Maize ear and stalk rot fungus) protein is Dioxygenase FUM3.